A 146-amino-acid polypeptide reads, in one-letter code: Large ribosomal subunit protein uL15 (146 aa).

Residues 18 to 45 (VLGRGLGCGKGKTSGRGHKGQKARSGCA) are disordered. Residues 30–39 (TSGRGHKGQK) show a composition bias toward basic residues.

Belongs to the universal ribosomal protein uL15 family. In terms of assembly, part of the 50S ribosomal subunit.

Binds to the 23S rRNA. In Anaplasma marginale (strain St. Maries), this protein is Large ribosomal subunit protein uL15.